A 188-amino-acid polypeptide reads, in one-letter code: Pro-FMRFamide-related neuropeptide VF (188 aa).

Positions 1–26 (MEIISLKRFILLTVATSSFLTSNTFC) are cleaved as a signal peptide. Positions 27-57 (TDEFMMPHFHSKEGDGKYSQLRGIPKGEKER) are excised as a propeptide. Phe94 is subject to Phenylalanine amide. The propeptide occupies 97–106 (TIDEKRSPAA). Disordered regions lie at residues 116 to 144 (SHFP…QKPL) and 163 to 188 (IQSP…KPEK). At Phe125 the chain carries Phenylalanine amide. A propeptide spanning residues 128 to 188 (TTARSPKTPA…TDDAERKPEK (61 aa)) is cleaved from the precursor.

This sequence belongs to the FARP (FMRFamide related peptide) family.

The protein resides in the secreted. Efficiently inhibits forskolin-induced production of cAMP. Acts as a potent negative regulator of gonadotropin synthesis and secretion. Induces secretion of prolactin. Functionally, efficiently inhibits forskolin-induced production of cAMP. Blocks morphine-induced analgesia. In Mus musculus (Mouse), this protein is Pro-FMRFamide-related neuropeptide VF (Npvf).